The chain runs to 609 residues: MNLIILKRHFSQHASLCLTPSISSSAPTKQSRILELCKLGQLTEAIRILNSTHSSEIPATPKLYASLLQTCNKVFSFIHGIQFHAHVVKSGLETDRNVGNSLLSLYFKLGPGMRETRRVFDGRFVKDAISWTSMMSGYVTGKEHVKALEVFVEMVSFGLDANEFTLSSAVKACSELGEVRLGRCFHGVVITHGFEWNHFISSTLAYLYGVNREPVDARRVFDEMPEPDVICWTAVLSAFSKNDLYEEALGLFYAMHRGKGLVPDGSTFGTVLTACGNLRRLKQGKEIHGKLITNGIGSNVVVESSLLDMYGKCGSVREARQVFNGMSKKNSVSWSALLGGYCQNGEHEKAIEIFREMEEKDLYCFGTVLKACAGLAAVRLGKEIHGQYVRRGCFGNVIVESALIDLYGKSGCIDSASRVYSKMSIRNMITWNAMLSALAQNGRGEEAVSFFNDMVKKGIKPDYISFIAILTACGHTGMVDEGRNYFVLMAKSYGIKPGTEHYSCMIDLLGRAGLFEEAENLLERAECRNDASLWGVLLGPCAANADASRVAERIAKRMMELEPKYHMSYVLLSNMYKAIGRHGDALNIRKLMVRRGVAKTVGQSWIDAH.

14 PPR repeats span residues 25–59 (SAPT…EIPA), 60–94 (TPKL…GLET), 95–126 (DRNV…RFVK), 127–161 (DAIS…GLDA), 162–196 (NEFT…GFEW), 197–227 (NHFI…MPEP), 228–263 (DVIC…GLVP), 264–298 (DGST…GIGS), 299–329 (NVVV…MSKK), 330–364 (NSVS…DLYC), 396–426 (NVIV…MSIR), 427–461 (NMIT…GIKP), 462–497 (DYIS…GIKP), and 498–532 (GTEH…NDAS). Residues 533-609 (LWGVLLGPCA…TVGQSWIDAH (77 aa)) form a type E motif region.

The protein belongs to the PPR family. PCMP-E subfamily.

This chain is Pentatricopeptide repeat-containing protein At1g03540 (PCMP-E4), found in Arabidopsis thaliana (Mouse-ear cress).